We begin with the raw amino-acid sequence, 349 residues long: Phosphoribosylformylglycinamidine cyclo-ligase (349 aa).

This sequence belongs to the AIR synthase family.

It is found in the cytoplasm. It catalyses the reaction 2-formamido-N(1)-(5-O-phospho-beta-D-ribosyl)acetamidine + ATP = 5-amino-1-(5-phospho-beta-D-ribosyl)imidazole + ADP + phosphate + H(+). It participates in purine metabolism; IMP biosynthesis via de novo pathway; 5-amino-1-(5-phospho-D-ribosyl)imidazole from N(2)-formyl-N(1)-(5-phospho-D-ribosyl)glycinamide: step 2/2. This chain is Phosphoribosylformylglycinamidine cyclo-ligase, found in Methanococcus vannielii (strain ATCC 35089 / DSM 1224 / JCM 13029 / OCM 148 / SB).